Consider the following 186-residue polypeptide: Der GTPase-activating protein YihI (186 aa).

The disordered stretch occupies residues 42–77 (KAREDKKKRKHKGLASGSRHSAVEEKANKLQNEIKD). Residues 62–77 (SAVEEKANKLQNEIKD) show a composition bias toward basic and acidic residues.

This sequence belongs to the YihI family. Interacts with Der.

Its function is as follows. A GTPase-activating protein (GAP) that modifies Der/EngA GTPase function. May play a role in ribosome biogenesis. This chain is Der GTPase-activating protein YihI, found in Haemophilus influenzae (strain ATCC 51907 / DSM 11121 / KW20 / Rd).